The primary structure comprises 583 residues: Cysteine/serine-rich nuclear protein 1 (583 aa).

Disordered regions lie at residues 1 to 79 and 306 to 381; these read MTGL…APRE and AESL…RSGV. Over residues 18 to 41 the composition is skewed to low complexity; sequence SSSSSSSFSSRLSLSSFPASSASP. Residues 54–69 show a composition bias toward polar residues; sequence APQSDQDSCGLQSFTP. A compositionally biased stretch (low complexity) spans 335–361; that stretch reads PVSSELGDSSCSSDMTDSSTTLSSGSS. A compositionally biased stretch (pro residues) spans 364–373; the sequence is PNHPAHPSLP.

Belongs to the AXUD1 family. Widely expressed with highest levels in thymus and lung. Low levels detected in naive T-cells.

The protein localises to the nucleus. Binds to the consensus sequence 5'-AGAGTG-3' and has transcriptional activator activity. May have a tumor-suppressor function. May play a role in apoptosis. This chain is Cysteine/serine-rich nuclear protein 1 (Csrnp1), found in Mus musculus (Mouse).